Reading from the N-terminus, the 76-residue chain is Small ribosomal subunit protein bS18 (76 aa).

It belongs to the bacterial ribosomal protein bS18 family. Part of the 30S ribosomal subunit. Forms a tight heterodimer with protein bS6.

Binds as a heterodimer with protein bS6 to the central domain of the 16S rRNA, where it helps stabilize the platform of the 30S subunit. The protein is Small ribosomal subunit protein bS18 of Carboxydothermus hydrogenoformans (strain ATCC BAA-161 / DSM 6008 / Z-2901).